The sequence spans 117 residues: Large ribosomal subunit protein bL20 (117 aa).

The protein belongs to the bacterial ribosomal protein bL20 family.

Functionally, binds directly to 23S ribosomal RNA and is necessary for the in vitro assembly process of the 50S ribosomal subunit. It is not involved in the protein synthesizing functions of that subunit. This Rickettsia rickettsii (strain Iowa) protein is Large ribosomal subunit protein bL20.